We begin with the raw amino-acid sequence, 658 residues long: MKLVTCGLPYANGKAHVGHLRTYVPADVYVRYLRMSGEEVVFVCGSDCHGTPIVVNAEQQGLSPKELVDIYHEHFIKIFDALNIKFDFYGRTDSDYHHHRTTEIVKRLIEKGYVYPKEIQLAYCPKCQRFLPDRYVEGICPYCGALARGDECDQGCGRHLEPGEIKEPRCKICGSKAEFRSQRHYFFKLTEFQDFLEDYLSKLKGTENALNYARNWVKNLRDWCITRNLEWGVRFPGEPNLVVYVWVDAPIGYISFTEKACEEKGCDWRKIWIDGDAEIIHFIGLDIVYHHCIFWPAMLKGADYALPSAVVASGMVKVEGKTFSKSRGYVVWVEEDYLKSGLSPDYLRYYIVNYTSHQKDLNFSWEVFREKVNNEVIATLGNFLYRVLLFAWKNFGEVRMEGVDEEVLEKIRETEQKILSALEEWEFKAASDAFMELATYGNVYFQNAKPWELIKTDKEAARRAVASCLQLAKALIIFAYPVMPESMERMAKAIGLDLENVRLSDAYKVDEVMKLSKPEVPFAKVEDEVIEKLQKVMEKRFRGEGEKMEQKEEISIEDFQKLDIRIGRVLKAEKVKKSKKLIKLIIDIGDEQRQIVSGIAEDYTPEELEGKLVVVLANLKPAKFMGVESRGMILAAEKDGKAVLLTPEKEVEPGTRVC.

The 'HIGH' region signature appears at 9 to 19 (PYANGKAHVGH). 4 residues coordinate Zn(2+): C140, C143, C152, and C156. The 'KMSKS' region signature appears at 322–326 (TFSKS). K325 contributes to the ATP binding site. One can recognise a tRNA-binding domain in the interval 558 to 658 (DFQKLDIRIG…KEVEPGTRVC (101 aa)).

It belongs to the class-I aminoacyl-tRNA synthetase family. MetG type 1 subfamily. In terms of assembly, homodimer. Zn(2+) is required as a cofactor.

The protein resides in the cytoplasm. The enzyme catalyses tRNA(Met) + L-methionine + ATP = L-methionyl-tRNA(Met) + AMP + diphosphate. Functionally, is required not only for elongation of protein synthesis but also for the initiation of all mRNA translation through initiator tRNA(fMet) aminoacylation. The chain is Methionine--tRNA ligase from Archaeoglobus fulgidus (strain ATCC 49558 / DSM 4304 / JCM 9628 / NBRC 100126 / VC-16).